Consider the following 388-residue polypeptide: Lipid-A-disaccharide synthase (388 aa).

Belongs to the LpxB family.

It catalyses the reaction a lipid X + a UDP-2-N,3-O-bis[(3R)-3-hydroxyacyl]-alpha-D-glucosamine = a lipid A disaccharide + UDP + H(+). It participates in bacterial outer membrane biogenesis; LPS lipid A biosynthesis. Condensation of UDP-2,3-diacylglucosamine and 2,3-diacylglucosamine-1-phosphate to form lipid A disaccharide, a precursor of lipid A, a phosphorylated glycolipid that anchors the lipopolysaccharide to the outer membrane of the cell. This is Lipid-A-disaccharide synthase from Burkholderia thailandensis (strain ATCC 700388 / DSM 13276 / CCUG 48851 / CIP 106301 / E264).